We begin with the raw amino-acid sequence, 428 residues long: Aspartate--tRNA(Asp) ligase (428 aa).

Glutamate 166 serves as a coordination point for L-aspartate. The interval 188–191 is aspartate; the sequence is QLYK. An L-aspartate-binding site is contributed by arginine 210. Residues 210–212, 218–220, and glutamate 351 contribute to the ATP site; these read RAE and RHL. Positions 351 and 354 each coordinate Mg(2+). Positions 354 and 358 each coordinate L-aspartate. 399 to 402 contributes to the ATP binding site; it reads GLER.

Belongs to the class-II aminoacyl-tRNA synthetase family. Type 2 subfamily. In terms of assembly, homodimer. The cofactor is Mg(2+).

The protein resides in the cytoplasm. The enzyme catalyses tRNA(Asp) + L-aspartate + ATP = L-aspartyl-tRNA(Asp) + AMP + diphosphate. Its function is as follows. Catalyzes the attachment of L-aspartate to tRNA(Asp) in a two-step reaction: L-aspartate is first activated by ATP to form Asp-AMP and then transferred to the acceptor end of tRNA(Asp). In Thermoplasma acidophilum (strain ATCC 25905 / DSM 1728 / JCM 9062 / NBRC 15155 / AMRC-C165), this protein is Aspartate--tRNA(Asp) ligase.